Consider the following 585-residue polypeptide: Ras-specific guanine nucleotide-releasing factor RalGPS1 (585 aa).

Residues 50–289 enclose the Ras-GEF domain; sequence TPEEFASQIT…YKLSLRIEPG (240 aa). Disordered regions lie at residues 289-342 and 378-410; these read GSSS…KSHS and RSPR…SEEM. Residues 303 to 312 show a composition bias toward low complexity; sequence AGPSAGSSSA. The PXXP motif lies at 330–333; the sequence is PTPP. Positions 385–396 are enriched in polar residues; that stretch reads THTSSTAITNGL. The 113-residue stretch at 459–571 folds into the PH domain; it reads VPTMEGPLRR…WHKHLDDACK (113 aa). The required for stimulation of nucleotide exchange by RALA stretch occupies residues 461-585; the sequence is TMEGPLRRKT…QVPANLMSFE (125 aa).

In terms of assembly, interacts with the SH3 domains of GRB2, NCK1, PLCG1 and SRC.

It is found in the cytoplasm. It localises to the cell membrane. Its function is as follows. Guanine nucleotide exchange factor for the small GTPase RALA. May be involved in cytoskeleton organization. The sequence is that of Ras-specific guanine nucleotide-releasing factor RalGPS1 (Ralgps1) from Mus musculus (Mouse).